The sequence spans 339 residues: uncharacterized protein (339 aa).

His17, His19, His197, and Asp278 together coordinate Zn(2+). Asp279 contacts substrate.

It belongs to the metallo-dependent hydrolases superfamily. Adenosine and AMP deaminases family. Adenine deaminase type 2 subfamily. Zn(2+) is required as a cofactor.

Its subcellular location is the cytoplasm. The protein localises to the nucleus. This is an uncharacterized protein from Schizosaccharomyces pombe (strain 972 / ATCC 24843) (Fission yeast).